A 678-amino-acid chain; its full sequence is Methionine--tRNA ligase (678 aa).

The 'HIGH' region signature appears at 12-22 (PYANGPIHLGH). Positions 143, 146, 156, and 159 each coordinate Zn(2+). The 'KMSKS' region motif lies at 328–332 (KMSKS). Position 331 (Lys-331) interacts with ATP. A tRNA-binding domain is found at 577-678 (DFSKVDLRIA…SGAQPGMRVK (102 aa)).

Belongs to the class-I aminoacyl-tRNA synthetase family. MetG type 1 subfamily. As to quaternary structure, homodimer. It depends on Zn(2+) as a cofactor.

It is found in the cytoplasm. It catalyses the reaction tRNA(Met) + L-methionine + ATP = L-methionyl-tRNA(Met) + AMP + diphosphate. In terms of biological role, is required not only for elongation of protein synthesis but also for the initiation of all mRNA translation through initiator tRNA(fMet) aminoacylation. This chain is Methionine--tRNA ligase, found in Acidithiobacillus ferrooxidans (strain ATCC 23270 / DSM 14882 / CIP 104768 / NCIMB 8455) (Ferrobacillus ferrooxidans (strain ATCC 23270)).